Here is a 361-residue protein sequence, read N- to C-terminus: Basic helix-loop-helix protein 79 (361 aa).

The tract at residues 66–159 (APEASNGSGS…ASTVTAGQKT (94 aa)) is disordered. Residues 124–138 (GRPERARPGAKKKAE) are compositionally biased toward basic and acidic residues. Residues 146-157 (PATSASTVTAGQ) are compositionally biased toward polar residues. Residues 166 to 173 (ARRGQATD) carry the Nuclear localization signal motif. The segment at 170-183 (QATDSHSLAERVRR) is basic motif; degenerate. A bHLH domain is found at 170-220 (QATDSHSLAERVRRERISERMRYLQELVPGCNKVTGKAGMLDEIINYVQSL). A helix-loop-helix motif region spans residues 184–220 (ERISERMRYLQELVPGCNKVTGKAGMLDEIINYVQSL).

The protein belongs to the bHLH protein family. In terms of assembly, homodimer. Interacts with IBH1.

Its subcellular location is the nucleus. Together with BCL1, positive regulator of cell elongation at least partially through increased gibberellic acid (GA) biosynthesis. The polypeptide is Basic helix-loop-helix protein 79 (Oryza sativa subsp. indica (Rice)).